The sequence spans 806 residues: Phenylalanine--tRNA ligase beta subunit (806 aa).

In terms of domain architecture, tRNA-binding spans 40 to 155 (NKGVKGVVVG…SDAEVGADAL (116 aa)). Residues 409-484 (VQERTVSVTA…RLYGYDHIPV (76 aa)) enclose the B5 domain. Residues aspartate 462, aspartate 468, glutamate 471, and glutamate 472 each contribute to the Mg(2+) site. An FDX-ACB domain is found at 712–805 (PRFPSMTRDM…VEEKFGAELR (94 aa)).

The protein belongs to the phenylalanyl-tRNA synthetase beta subunit family. Type 1 subfamily. As to quaternary structure, tetramer of two alpha and two beta subunits. Mg(2+) is required as a cofactor.

It is found in the cytoplasm. It catalyses the reaction tRNA(Phe) + L-phenylalanine + ATP = L-phenylalanyl-tRNA(Phe) + AMP + diphosphate + H(+). The sequence is that of Phenylalanine--tRNA ligase beta subunit from Bacillus cereus (strain ZK / E33L).